The sequence spans 541 residues: MPILSLSSTRNSVLTRIYDYLKALVQQVIVPNVEDDKSSKSTPFEKLEPAKQNHPQKDCCATEKDDLVDVSELFPKQNNKQLSLTSKSSVVPCALNLDNLETPFSIKIDNNGAVTTQLNLDEPILRGPSRGEPAKLQNDLISSPPLEESYINNDQYKALFPSNFLPITPVSSVITPASKKSIDESPLSDEVQGIADESSETLPYICHYCDARFRIRGYLTRHIKKHAKRKAYHCPFFDNSISQELRCHTSGGFSRRDTYKTHLKSRHFTYPEGVKPQDRNKSPGVCTQCGEHFSTSESWVENHIEAGSCKGLPEGYSEGIREKKKTSKMKMIKTSDGQTRFISSDESVSEPALQNKNCIEATVMQSKERPNDKIIPTKTEKNDFGIGTQWFERKQISRPTQTTQSRGPTEVQNLKEWSIISPPILSPQNASSVPQEYQSSRYTLHMDSPALSSASSALSPLSGDPITTTETNKSYPLDSEQSLLEPDKTEEDAINQSKESNMISINEMLQKQMDFELLGENHLKETQDYLALYKKAYGIEF.

Residues 13-32 are i; that stretch reads VLTRIYDYLKALVQQVIVPN. Positions 35–58 are disordered; the sequence is DDKSSKSTPFEKLEPAKQNHPQKD. The tract at residues 73 to 105 is II; the sequence is LFPKQNNKQLSLTSKSSVVPCALNLDNLETPFS. The C2H2-type 1 zinc finger occupies 204–226; that stretch reads YICHYCDARFRIRGYLTRHIKKH. The segment at 232–267 adopts a C2H2-type 2; atypical zinc-finger fold; that stretch reads YHCPFFDNSISQELRCHTSGGFSRRDTYKTHLKSRH. Residues 284 to 309 form a C2H2-type 3; atypical zinc finger; the sequence is GVCTQCGEHFSTSESWVENHIEAGSC. The span at 452–462 shows a compositional bias: low complexity; the sequence is SSASSALSPLS. A disordered region spans residues 452–497; that stretch reads SSASSALSPLSGDPITTTETNKSYPLDSEQSLLEPDKTEEDAINQS. Residues 465-482 show a composition bias toward polar residues; sequence PITTTETNKSYPLDSEQS.

Interacts (via Region II) with SSY5; protease component of the SPS-sensor. Post-translationally, activated by the amino acid-induced proteolytic removal of an N-terminal inhibitory domain by serine protease SSY5, an intrinsic component of the SPS-sensor. Processing requires at least 2 components of the SCF(GRR1) ubiquitin ligase complex, namely the F-box protein GRR1 and the E2 enzyme CDC34, but does not depend on the proteasome. Processing is negatively regulated by the protein phosphatase 2A regulatory subunit RTS1.

It is found in the cell membrane. It localises to the nucleus. Transcription factor involved in the regulation of gene expression in response to extracellular amino acid levels. Synthesized as latent cytoplasmic precursor, which, upon a signal initiated by the plasma membrane SPS (SSY1-PTR3-SSY5) amino acid sensor system, becomes proteolytically activated and relocates to the nucleus, where it induces the expression of SPS-sensor-regulated genes, including the amino-acid permeases BAP2 and BAP3. Binding to promoters is facilitated by DAL81. Involved in the repression of genes subject to nitrogen catabolite repression and genes involved in stress response. Negatively regulated by inner nuclear membrane proteins ASI1, ASI2 and ASI3, which prevent unprocessed precursor forms that escape cytoplasmic anchoring from inducing SPS-sensor-regulated genes. This chain is Transcription factor STP2 (STP2), found in Saccharomyces cerevisiae (strain ATCC 204508 / S288c) (Baker's yeast).